A 1349-amino-acid chain; its full sequence is Protein strawberry notch homolog 2 (1349 aa).

Disordered stretches follow at residues 170–212 (YQSH…QHPD), 609–633 (STRR…PKAS), and 1319–1349 (PTET…FPNS). Residues 177-188 (EEEEGEEEEETE) show a composition bias toward acidic residues. Basic residues predominate over residues 609–631 (STRRRRDRGGGKRKRRPRGRGPK).

The protein belongs to the SBNO family. In terms of assembly, interacts with TAL1; this interaction inhibits TAL1 occupancy of the DCSTAMP promoter, leading to the activation of the DCSTAMP promoter by the transcription factor MITF. As to expression, expressed in the spleen and bone marrow, and to a lesser extent in the kidney, liver, brain, skin, heart and muscle. Expressed predominantly in osteoclasts, and to a lesser extent in T-cells, B-cells and osteoblasts. Expressed in macrophages.

Functionally, acts as a transcriptional coregulator, that can have both coactivator and corepressor functions. Inhibits the DCSTAMP-repressive activity of TAL1, hence enhancing the access of the transcription factor MITF to the DC-STAMP promoter in osteoclast. Plays a role in bone homeostasis; required as a positive regulator in TNFSF11//RANKL-mediated osteoclast fusion via a DCSTAMP-dependent pathway. May also be required in the regulation of osteoblast differentiation. Involved in the transcriptional corepression of NF-kappaB in macrophages. Plays a role as a regulator in the pro-inflammatory cascade. This Mus musculus (Mouse) protein is Protein strawberry notch homolog 2 (Sbno2).